Reading from the N-terminus, the 1131-residue chain is Translation initiation factor IF-2 (1131 aa).

Positions 49 to 542 (KFKGSVSSNE…AFIMPKPQQS (494 aa)) are disordered. A compositionally biased stretch (basic and acidic residues) spans 60-75 (KSIDNGKASRVEKPEK). Polar residues-rich tracts occupy residues 76-88 (NNSV…QTPS) and 108-125 (SEQN…NIQS). Residues 127–138 (GDRKYQHTDRRP) are compositionally biased toward basic and acidic residues. Positions 139-152 (QGNNGEGPQTSTNS) are enriched in polar residues. Composition is skewed to basic and acidic residues over residues 164–180 (GDRR…RPYN) and 223–239 (GDRR…RPYN). The segment covering 411-436 (GQGGYGGRPQGQGSYGGRPQGQGGYA) has biased composition (gly residues). Basic and acidic residues-rich tracts occupy residues 450–479 (KDFD…KSSI) and 487–530 (LTKE…DPNR). Residues 632–801 (KRPPVVCVMG…ILTAEMGELK (170 aa)) enclose the tr-type G domain. Residues 641–648 (GHVDHGKT) form a G1 region. 641–648 (GHVDHGKT) contacts GTP. Residues 666 to 670 (GITQH) form a G2 region. The segment at 687 to 690 (DTPG) is G3. Residues 687-691 (DTPGH) and 741-744 (NKID) contribute to the GTP site. The G4 stretch occupies residues 741 to 744 (NKID). The interval 777 to 779 (SAH) is G5.

Belongs to the TRAFAC class translation factor GTPase superfamily. Classic translation factor GTPase family. IF-2 subfamily.

It localises to the cytoplasm. Functionally, one of the essential components for the initiation of protein synthesis. Protects formylmethionyl-tRNA from spontaneous hydrolysis and promotes its binding to the 30S ribosomal subunits. Also involved in the hydrolysis of GTP during the formation of the 70S ribosomal complex. The protein is Translation initiation factor IF-2 of Lachnoclostridium phytofermentans (strain ATCC 700394 / DSM 18823 / ISDg) (Clostridium phytofermentans).